A 522-amino-acid chain; its full sequence is Maturase K (522 aa).

Belongs to the intron maturase 2 family. MatK subfamily.

It localises to the plastid. It is found in the chloroplast. Functionally, usually encoded in the trnK tRNA gene intron. Probably assists in splicing its own and other chloroplast group II introns. The protein is Maturase K of Iris danfordiae (Danford iris).